A 312-amino-acid polypeptide reads, in one-letter code: Acetyl-coenzyme A carboxylase carboxyl transferase subunit alpha (312 aa).

The 251-residue stretch at 36 to 286 (NLEKEISKTY…ADYVKKSLNE (251 aa)) folds into the CoA carboxyltransferase C-terminal domain.

The protein belongs to the AccA family. In terms of assembly, acetyl-CoA carboxylase is a heterohexamer composed of biotin carboxyl carrier protein (AccB), biotin carboxylase (AccC) and two subunits each of ACCase subunit alpha (AccA) and ACCase subunit beta (AccD).

It localises to the cytoplasm. It carries out the reaction N(6)-carboxybiotinyl-L-lysyl-[protein] + acetyl-CoA = N(6)-biotinyl-L-lysyl-[protein] + malonyl-CoA. The protein operates within lipid metabolism; malonyl-CoA biosynthesis; malonyl-CoA from acetyl-CoA: step 1/1. Its function is as follows. Component of the acetyl coenzyme A carboxylase (ACC) complex. First, biotin carboxylase catalyzes the carboxylation of biotin on its carrier protein (BCCP) and then the CO(2) group is transferred by the carboxyltransferase to acetyl-CoA to form malonyl-CoA. This is Acetyl-coenzyme A carboxylase carboxyl transferase subunit alpha from Campylobacter jejuni (strain RM1221).